Here is a 781-residue protein sequence, read N- to C-terminus: Molybdenum cofactor sulfurase (781 aa).

Lysine 246 is modified (N6-(pyridoxal phosphate)lysine). Residue cysteine 413 is part of the active site. One can recognise an MOSC domain in the interval 635–781; that stretch reads LRLLRQSGQR…MTCGDVVLVE (147 aa). Residue serine 734 is modified to Phosphoserine.

This sequence belongs to the class-V pyridoxal-phosphate-dependent aminotransferase family. MOCOS subfamily. It depends on pyridoxal 5'-phosphate as a cofactor.

It catalyses the reaction Mo-molybdopterin + L-cysteine + AH2 = thio-Mo-molybdopterin + L-alanine + A + H2O. It functions in the pathway cofactor biosynthesis; molybdopterin biosynthesis. Its function is as follows. Sulfurates the molybdenum cofactor. Sulfation of molybdenum is essential for xanthine dehydrogenase (XDH) and aldehyde oxidase (ADO) enzymes in which molybdenum cofactor is liganded by 1 oxygen and 1 sulfur atom in active form. The protein is Molybdenum cofactor sulfurase of Drosophila melanogaster (Fruit fly).